We begin with the raw amino-acid sequence, 118 residues long: Large ribosomal subunit protein bL20 (118 aa).

The protein belongs to the bacterial ribosomal protein bL20 family.

Its function is as follows. Binds directly to 23S ribosomal RNA and is necessary for the in vitro assembly process of the 50S ribosomal subunit. It is not involved in the protein synthesizing functions of that subunit. In Staphylococcus saprophyticus subsp. saprophyticus (strain ATCC 15305 / DSM 20229 / NCIMB 8711 / NCTC 7292 / S-41), this protein is Large ribosomal subunit protein bL20.